The following is a 185-amino-acid chain: MSPRAVLVGLPGSGKTTIGKRLANALNLQLVDTDHMLEKKLGKTCNQIMGELGEPAFREQEAIVVAEALQTDGIVSLGGGAVVTESTRELLADHTVVYLNVSIDEGVRRTSGSNTRPLLNVADPRGKYAQLFAQRSAFYEEVSNFMVRCDGKEPRRVVTDILSFIEEVRLERLTERDASHQIRPQ.

ATP is bound at residue 12 to 17; that stretch reads GSGKTT. Mg(2+) is bound at residue T16. Residues D34, R58, and G79 each contribute to the substrate site. R116 contacts ATP. Residue R135 coordinates substrate.

The protein belongs to the shikimate kinase family. As to quaternary structure, monomer. Mg(2+) serves as cofactor.

The protein localises to the cytoplasm. The catalysed reaction is shikimate + ATP = 3-phosphoshikimate + ADP + H(+). The protein operates within metabolic intermediate biosynthesis; chorismate biosynthesis; chorismate from D-erythrose 4-phosphate and phosphoenolpyruvate: step 5/7. Its function is as follows. Catalyzes the specific phosphorylation of the 3-hydroxyl group of shikimic acid using ATP as a cosubstrate. In Corynebacterium jeikeium (strain K411), this protein is Shikimate kinase.